Here is a 332-residue protein sequence, read N- to C-terminus: Ketol-acid reductoisomerase (NADP(+)) (332 aa).

Positions 1-182 constitute a KARI N-terminal Rossmann domain; sequence MAQVWKDAEI…GSARAGLIKT (182 aa). NADP(+)-binding positions include 25 to 28, Lys48, Ser53, and 83 to 86; these read YGIQ and DMIQ. The active site involves His108. Gly134 lines the NADP(+) pocket. A KARI C-terminal knotted domain is found at 183 to 329; the sequence is TFKEEVETDW…RKMRKMMWPD (147 aa). Mg(2+) contacts are provided by Asp191, Glu195, Glu227, and Glu231. Ser252 contributes to the substrate binding site.

The protein belongs to the ketol-acid reductoisomerase family. It depends on Mg(2+) as a cofactor.

It carries out the reaction (2R)-2,3-dihydroxy-3-methylbutanoate + NADP(+) = (2S)-2-acetolactate + NADPH + H(+). The catalysed reaction is (2R,3R)-2,3-dihydroxy-3-methylpentanoate + NADP(+) = (S)-2-ethyl-2-hydroxy-3-oxobutanoate + NADPH + H(+). It participates in amino-acid biosynthesis; L-isoleucine biosynthesis; L-isoleucine from 2-oxobutanoate: step 2/4. The protein operates within amino-acid biosynthesis; L-valine biosynthesis; L-valine from pyruvate: step 2/4. In terms of biological role, involved in the biosynthesis of branched-chain amino acids (BCAA). Catalyzes an alkyl-migration followed by a ketol-acid reduction of (S)-2-acetolactate (S2AL) to yield (R)-2,3-dihydroxy-isovalerate. In the isomerase reaction, S2AL is rearranged via a Mg-dependent methyl migration to produce 3-hydroxy-3-methyl-2-ketobutyrate (HMKB). In the reductase reaction, this 2-ketoacid undergoes a metal-dependent reduction by NADPH to yield (R)-2,3-dihydroxy-isovalerate. This is Ketol-acid reductoisomerase (NADP(+)) from Cenarchaeum symbiosum (strain A).